Here is a 207-residue protein sequence, read N- to C-terminus: Large ribosomal subunit protein uL4 (207 aa).

The disordered stretch occupies residues 47–78 (GTHKVKNRSEVRGGGRKPWRQKGTGRARQGSI). Residues 60–71 (GGRKPWRQKGTG) show a composition bias toward basic residues.

The protein belongs to the universal ribosomal protein uL4 family. Part of the 50S ribosomal subunit.

Its function is as follows. One of the primary rRNA binding proteins, this protein initially binds near the 5'-end of the 23S rRNA. It is important during the early stages of 50S assembly. It makes multiple contacts with different domains of the 23S rRNA in the assembled 50S subunit and ribosome. In terms of biological role, forms part of the polypeptide exit tunnel. This Listeria innocua serovar 6a (strain ATCC BAA-680 / CLIP 11262) protein is Large ribosomal subunit protein uL4.